We begin with the raw amino-acid sequence, 91 residues long: Long neurotoxin OH-57 (91 aa).

An N-terminal signal peptide occupies residues 1-21 (MKTLLLTLVVVTIVCLDLGYT). Disulfide bonds link C24-C41, C34-C62, C47-C51, C66-C77, and C78-C83.

This sequence belongs to the three-finger toxin family. Long-chain subfamily. Type II alpha-neurotoxin sub-subfamily. In terms of tissue distribution, expressed by the venom gland.

The protein resides in the secreted. Its function is as follows. Binds with high affinity to muscular (alpha-1/CHRNA1) and neuronal (alpha-7/CHRNA7) nicotinic acetylcholine receptor (nAChR) and inhibits acetylcholine from binding to the receptor, thereby impairing neuromuscular and neuronal transmission. This is Long neurotoxin OH-57 from Ophiophagus hannah (King cobra).